A 557-amino-acid polypeptide reads, in one-letter code: Formate--tetrahydrofolate ligase 2 (557 aa).

Residue 66–73 (TPAGEGKT) coordinates ATP.

It belongs to the formate--tetrahydrofolate ligase family.

The enzyme catalyses (6S)-5,6,7,8-tetrahydrofolate + formate + ATP = (6R)-10-formyltetrahydrofolate + ADP + phosphate. Its pathway is one-carbon metabolism; tetrahydrofolate interconversion. The chain is Formate--tetrahydrofolate ligase 2 from Streptococcus pyogenes serotype M18 (strain MGAS8232).